The following is a 152-amino-acid chain: MIALIQRVTRADVRVGGRTTGEIGAGLLALVCAERGDTEAAADKLLAKLLGYRVFSDAAGKMNLPVSNIDGEGRAGGLLLVSQFTLAADTNSGLRPSFTPAAPPDEGARLFDYFVAAARARHPIVETGEFGADMQVSLVNDGPVTFWLQVRP.

Positions 142–143 (GP) match the Gly-cisPro motif, important for rejection of L-amino acids motif.

It belongs to the DTD family. As to quaternary structure, homodimer.

The protein localises to the cytoplasm. It carries out the reaction glycyl-tRNA(Ala) + H2O = tRNA(Ala) + glycine + H(+). The enzyme catalyses a D-aminoacyl-tRNA + H2O = a tRNA + a D-alpha-amino acid + H(+). An aminoacyl-tRNA editing enzyme that deacylates mischarged D-aminoacyl-tRNAs. Also deacylates mischarged glycyl-tRNA(Ala), protecting cells against glycine mischarging by AlaRS. Acts via tRNA-based rather than protein-based catalysis; rejects L-amino acids rather than detecting D-amino acids in the active site. By recycling D-aminoacyl-tRNA to D-amino acids and free tRNA molecules, this enzyme counteracts the toxicity associated with the formation of D-aminoacyl-tRNA entities in vivo and helps enforce protein L-homochirality. The sequence is that of D-aminoacyl-tRNA deacylase from Burkholderia cenocepacia (strain HI2424).